We begin with the raw amino-acid sequence, 620 residues long: 1-deoxy-D-xylulose-5-phosphate synthase (620 aa).

Thiamine diphosphate-binding positions include His80 and 121-123; that span reads GHS. Asp152 serves as a coordination point for Mg(2+). Residues 153 to 154, Asn181, Tyr288, and Glu370 each bind thiamine diphosphate; that span reads GA. Asn181 provides a ligand contact to Mg(2+).

The protein belongs to the transketolase family. DXPS subfamily. As to quaternary structure, homodimer. Requires Mg(2+) as cofactor. It depends on thiamine diphosphate as a cofactor.

The enzyme catalyses D-glyceraldehyde 3-phosphate + pyruvate + H(+) = 1-deoxy-D-xylulose 5-phosphate + CO2. The protein operates within metabolic intermediate biosynthesis; 1-deoxy-D-xylulose 5-phosphate biosynthesis; 1-deoxy-D-xylulose 5-phosphate from D-glyceraldehyde 3-phosphate and pyruvate: step 1/1. In terms of biological role, catalyzes the acyloin condensation reaction between C atoms 2 and 3 of pyruvate and glyceraldehyde 3-phosphate to yield 1-deoxy-D-xylulose-5-phosphate (DXP). In Photobacterium profundum (strain SS9), this protein is 1-deoxy-D-xylulose-5-phosphate synthase.